The following is a 1034-amino-acid chain: Beta-galactosidase (1034 aa).

The substrate site is built by Asn-108 and Asp-207. Asp-207 contributes to the Na(+) binding site. Mg(2+) is bound by residues Glu-423, His-425, and Glu-468. Residues Glu-468 and 544-547 (EYAH) each bind substrate. Glu-468 acts as the Proton donor in catalysis. The active-site Nucleophile is the Glu-544. Asn-604 contacts Mg(2+). The Na(+) site is built by Phe-608 and Asn-611. Residues Asn-611 and Trp-1010 each contribute to the substrate site.

This sequence belongs to the glycosyl hydrolase 2 family. In terms of assembly, homotetramer. Mg(2+) serves as cofactor. Requires Na(+) as cofactor.

The catalysed reaction is Hydrolysis of terminal non-reducing beta-D-galactose residues in beta-D-galactosides.. This is Beta-galactosidase from Klebsiella pneumoniae.